The following is a 137-amino-acid chain: MERTFAIIKPDAVERRLAGTVIDRIEANGFTIVGMKKIKLSKEQAGGFYCVHRERPFFGELCDFMSRSPVIVLCLEKENAIADWRKLMGATNPANAEPGTIRRDFALSLSENSAHGSDAPETAAFEIAYFFNALELV.

Lys9, Phe57, Arg85, Thr91, Arg102, and Asn112 together coordinate ATP. The active-site Pros-phosphohistidine intermediate is His115.

Belongs to the NDK family. As to quaternary structure, homotetramer. Mg(2+) is required as a cofactor.

The protein localises to the cytoplasm. It catalyses the reaction a 2'-deoxyribonucleoside 5'-diphosphate + ATP = a 2'-deoxyribonucleoside 5'-triphosphate + ADP. The enzyme catalyses a ribonucleoside 5'-diphosphate + ATP = a ribonucleoside 5'-triphosphate + ADP. Functionally, major role in the synthesis of nucleoside triphosphates other than ATP. The ATP gamma phosphate is transferred to the NDP beta phosphate via a ping-pong mechanism, using a phosphorylated active-site intermediate. The protein is Nucleoside diphosphate kinase of Pelobacter propionicus (strain DSM 2379 / NBRC 103807 / OttBd1).